Consider the following 24-residue polypeptide: Protein YsdE (24 aa).

The polypeptide is Protein YsdE (Escherichia coli (strain K12)).